The sequence spans 529 residues: Bifunctional purine biosynthesis protein PurH (529 aa).

An MGS-like domain is found at 1-148; that stretch reads MQQRRPVRRA…KNHKDVAIVV (148 aa). Lys287 is subject to N6-acetyllysine.

The protein belongs to the PurH family.

It catalyses the reaction (6R)-10-formyltetrahydrofolate + 5-amino-1-(5-phospho-beta-D-ribosyl)imidazole-4-carboxamide = 5-formamido-1-(5-phospho-D-ribosyl)imidazole-4-carboxamide + (6S)-5,6,7,8-tetrahydrofolate. The enzyme catalyses IMP + H2O = 5-formamido-1-(5-phospho-D-ribosyl)imidazole-4-carboxamide. Its pathway is purine metabolism; IMP biosynthesis via de novo pathway; 5-formamido-1-(5-phospho-D-ribosyl)imidazole-4-carboxamide from 5-amino-1-(5-phospho-D-ribosyl)imidazole-4-carboxamide (10-formyl THF route): step 1/1. It functions in the pathway purine metabolism; IMP biosynthesis via de novo pathway; IMP from 5-formamido-1-(5-phospho-D-ribosyl)imidazole-4-carboxamide: step 1/1. The protein is Bifunctional purine biosynthesis protein PurH of Escherichia coli (strain 55989 / EAEC).